A 776-amino-acid chain; its full sequence is MTISPPERGEKAKPIYDQPVDRDHVPADFEKFEQPGFFSKSLAKGPNSTTWIWNLHADAHDFDTHIGDLEETSRKIFSAHFGHLAIVFIWMSGAFFHGARFSNYSGWLADPTHVKASAQVVWPIVGQEIMNADMGAGFNGIQITSGIFQMWRAWGITSETELMALATGALIMAALVLHGGIFHYHKAAPKLEWFKKIESMLQHHQIGLFGLGSLGWTGHLIHVANPTNALLDAIDAGTPMVLDGKTIATAADIPLPHELYNADLVGQIYPGLASGVGNFFSANWWAFSDFLTNNGGVNPVTGALWSTDVAHHHLAWAVFLMFGGHVYRSRFGIGHSMKEIMGNVKGDPLLFPAPNGHKGLFEFLSNSWHAQLAVNLACIGSGSIVVAHHMYSLPPYPYLATDYPTVLGLFTHHMWIGGLMICGAAAHAGIAVIRDYDVSVHVDNVLDRMFKARDAIISHLNWVCMFLGFHSFGLYIHNDSMRALGRSQDMFSDSAIQLQPVLAQWIQSLWASSIGTSAVVGTTTGLPGAVSDVFNGSVVAVGGKVALMAIPLGTADLMIHHIHAFTIHVTCLILLKGVLFARSSRLVPDKANLGFRFSCDGPGRGGTCQVSSWDHVFLGLFWMYNSLSMVIFYFSWKMQSDVWGTVNSDGSVTHLVSGNFAQSAITVNGWFRDFLWAQSSQVLTSYGTGLSGYGLLFLGGHFVWAFSLMFLFSGRGYWQELFESIIWAHNKLKLAPTIQPRALSITQGRAVGVTHFLFGGIVTTWAFFHARLLGLG.

The next 8 membrane-spanning stretches (helical) occupy residues 76-99 (IFSA…FHGA), 162-185 (LMAL…FHYH), 201-225 (LQHH…HVAN), 309-327 (VAHH…GHVY), 368-391 (WHAQ…HHMY), 407-433 (LGLF…IAVI), 455-477 (AIIS…LYIH), and 557-575 (LMIH…LILL). [4Fe-4S] cluster is bound by residues C599 and C608. The next 2 helical transmembrane spans lie at 615-636 (HVFL…YFSW) and 690-712 (LSGY…MFLF). H701 contributes to the divinylchlorophyll a' binding site. Residues M709 and Y717 each coordinate divinyl chlorophyll a. W718 is a phylloquinone binding site. The helical transmembrane segment at 750–770 (AVGVTHFLFGGIVTTWAFFHA) threads the bilayer.

It belongs to the PsaA/PsaB family. The PsaA/B heterodimer binds the P700 chlorophyll special pair and subsequent electron acceptors. PSI consists of a core antenna complex that captures photons, and an electron transfer chain that converts photonic excitation into a charge separation. The cyanobacterial PSI reaction center is composed of one copy each of PsaA,B,C,D,E,F,I,J,K,L,M and X, and forms trimeric complexes. It depends on PSI electron transfer chain: 5 divinyl chlorophyll a, 1 divinyl chlorophyll a', 2 phylloquinones and 3 4Fe-4S clusters. PSI core antenna: 90 divinyl chlorophyll a, 22 carotenoids, 3 phospholipids and 1 galactolipid. P700 is a divinyl chlorophyll a/divinyl chlorophyll a' dimer, A0 is one or more chlorophyll divinyl a, A1 is one or both phylloquinones and FX is a shared 4Fe-4S iron-sulfur center. as a cofactor.

The protein localises to the cellular thylakoid membrane. It catalyses the reaction reduced [plastocyanin] + hnu + oxidized [2Fe-2S]-[ferredoxin] = oxidized [plastocyanin] + reduced [2Fe-2S]-[ferredoxin]. PsaA and PsaB bind P700, the primary electron donor of photosystem I (PSI), as well as the electron acceptors A0, A1 and FX. PSI is a plastocyanin/cytochrome c6-ferredoxin oxidoreductase, converting photonic excitation into a charge separation, which transfers an electron from the donor P700 chlorophyll pair to the spectroscopically characterized acceptors A0, A1, FX, FA and FB in turn. Oxidized P700 is reduced on the lumenal side of the thylakoid membrane by plastocyanin or cytochrome c6. This Prochlorococcus marinus (strain MIT 9313) protein is Photosystem I P700 chlorophyll a apoprotein A1.